Consider the following 247-residue polypeptide: PF03932 family protein CutC (247 aa).

It belongs to the CutC family.

The protein localises to the cytoplasm. The polypeptide is PF03932 family protein CutC (Klebsiella pneumoniae subsp. pneumoniae (strain ATCC 700721 / MGH 78578)).